A 658-amino-acid polypeptide reads, in one-letter code: Translin-associated factor X-interacting protein 1 (658 aa).

Coiled coils occupy residues 144–184 and 230–295; these read EISL…AEEY and ALKM…LMQL.

As to quaternary structure, interacts with TSNAX.

It localises to the cytoplasm. The protein resides in the perinuclear region. In terms of biological role, possible role in spermatogenesis. In Homo sapiens (Human), this protein is Translin-associated factor X-interacting protein 1.